The primary structure comprises 630 residues: Plastin-1 (630 aa).

The fimbrin headpiece stretch occupies residues 1-114; the sequence is MENNVTTISR…LGGTSSISTE (114 aa). EF-hand domains lie at 11 to 46 and 51 to 86; these read EELEELREAFNKIDIDNSGYVSDYELQDLFKEASLP and KVREIIEKIFAVTDSNKDGKINFEEFVSLIQELKSK. The Ca(2+) site is built by aspartate 24, aspartate 26, serine 28, tyrosine 30, glutamate 35, aspartate 64, asparagine 66, aspartate 68, lysine 70, and glutamate 75. 2 actin-binding regions span residues 108-375 and 376-624; these read TSSI…LFNT and YPAL…LMGR. The tract at residues 115 to 630 is fimbrin core; that stretch reads GTQHSYSEEE…LMGRGLNKIK (516 aa). Calponin-homology (CH) domains lie at 122–238, 266–377, 396–505, and 517–626; these read EEEK…KVGL, LSPE…NTYP, SNEE…RRYT, and KVND…GRGL.

Monomer. In terms of processing, the N-terminus is blocked.

It localises to the cytoplasm. The protein resides in the cell projection. Its subcellular location is the stereocilium. Functionally, actin-bundling protein. In the inner ear, it is required for stereocilia formation. Mediates liquid packing of actin filaments that is necessary for stereocilia to grow to their proper dimensions. This chain is Plastin-1 (PLS1), found in Gallus gallus (Chicken).